Consider the following 740-residue polypeptide: MPEQHPPITETTTGAASNGCPVVGHMKYPVEGGGNQDWWPNRLNLKVLHQNPAVADPMGAAFDYAAEVATIDVDALTRDIEEVMTTSQPWWPADYGHYGPLFIRMAWHAAGTYRIHDGRGGAGGGMQRFAPLNSWPDNASLDKARRLLWPVKKKYGKKLSWADLIVFAGNCALESMGFKTFGFGFGRVDQWEPDEVYWGKEATWLGDERYSGKRDLENPLAAVQMGLIYVNPEGPNGNPDPMAAAVDIRETFRRMAMNDVETAALIVGGHTFGKTHGAGPADLVGPEPEAAPLEQMGLGWKSSYGTGTGKDAITSGIEVVWTNTPTKWDNSFLEILYGYEWELTKSPAGAWQYTAKDGAGAGTIPDPFGGPGRSPTMLATDLSLRVDPIYERITRRWLEHPEELADEFAKAWYKLIHRDMGPVARYLGPLVPKQTLLWQDPVPAVSHDLVGEAEIASLKSQIRASGLTVSQLVSTAWAAASSFRGSDKRGGANGGRIRLQPQVGWEVNDPDGDLRKVIRTLEEIQESFNSAAPGNIKVSFADLVVLGGCAAIEKAAKAAGHNITVPFTPGRTDASQEQTDVESFAVLEPKADGFRNYLGKGNPLPAEYMLLDKANLLTLSAPEMTVLVGGLRVLGANYKRLPLGVFTEASESLTNDFFVNLLDMGITWEPSPADDGTYQGKDGSGKVKWTGSRVDLVFGSNSELRALVEVYGADDAQPKFVQDFVAAWDKVMNLDRFDVR.

Positions 107-229 (WHAAGTYRIH…LAAVQMGLIY (123 aa)) form a cross-link, tryptophyl-tyrosyl-methioninium (Trp-Tyr) (with M-255). Histidine 108 functions as the Proton acceptor in the catalytic mechanism. Residues 229–255 (YVNPEGPNGNPDPMAAAVDIRETFRRM) constitute a cross-link (tryptophyl-tyrosyl-methioninium (Tyr-Met) (with W-107)). Histidine 270 is a heme b binding site. The Tryptophan radical intermediate role is filled by tryptophan 321.

Belongs to the peroxidase family. Peroxidase/catalase subfamily. Homodimer. Heme b serves as cofactor. Post-translationally, formation of the three residue Trp-Tyr-Met cross-link is important for the catalase, but not the peroxidase activity of the enzyme.

The catalysed reaction is H2O2 + AH2 = A + 2 H2O. The enzyme catalyses 2 H2O2 = O2 + 2 H2O. Bifunctional enzyme with both catalase and broad-spectrum peroxidase activity, oxidizing various electron donors including NADP(H). Protects M.tuberculosis against toxic reactive oxygen species (ROS) including hydrogen peroxide as well as organic peroxides and thus contributes to its survival within host macrophages by countering the phagocyte oxidative burst. Also displays efficient peroxynitritase activity, which may help the bacterium to persist in macrophages. Functionally, catalyzes the oxidative activation of the antitubercular pro-drug isoniazid (INH) to generate an isonicotinoyl radical that then reacts nonenzymatically with NAD to form an isonicotinoyl-NAD adduct which inhibits InhA. This chain is Catalase-peroxidase, found in Mycobacterium tuberculosis (strain CDC 1551 / Oshkosh).